The following is a 198-amino-acid chain: Glycerol-3-phosphate acyltransferase (198 aa).

Helical transmembrane passes span Phe6–Leu26, Gly55–Ser75, Ala83–Phe103, Ile113–Ala133, and Ile154–Leu174.

Belongs to the PlsY family. In terms of assembly, probably interacts with PlsX.

The protein resides in the cell inner membrane. It carries out the reaction an acyl phosphate + sn-glycerol 3-phosphate = a 1-acyl-sn-glycero-3-phosphate + phosphate. The protein operates within lipid metabolism; phospholipid metabolism. Its function is as follows. Catalyzes the transfer of an acyl group from acyl-phosphate (acyl-PO(4)) to glycerol-3-phosphate (G3P) to form lysophosphatidic acid (LPA). This enzyme utilizes acyl-phosphate as fatty acyl donor, but not acyl-CoA or acyl-ACP. This chain is Glycerol-3-phosphate acyltransferase, found in Bradyrhizobium sp. (strain BTAi1 / ATCC BAA-1182).